Reading from the N-terminus, the 163-residue chain is Small heat shock protein C1 (163 aa).

The 109-residue stretch at 55–163 folds into the sHSP domain; sequence MFYESSSIKS…EQDAKEITIN (109 aa).

This sequence belongs to the small heat shock protein (HSP20) family.

This chain is Small heat shock protein C1 (hspC1), found in Rickettsia typhi (strain ATCC VR-144 / Wilmington).